Here is a 926-residue protein sequence, read N- to C-terminus: Beta-mannosidase A (926 aa).

The N-terminal stretch at 1–21 (MHVKAETVLALLTPAPPSVVG) is a signal peptide. 5 N-linked (GlcNAc...) asparagine glycosylation sites follow: Asn-40, Asn-242, Asn-277, Asn-311, and Asn-342. Glu-474 functions as the Proton donor in the catalytic mechanism. 10 N-linked (GlcNAc...) asparagine glycosylation sites follow: Asn-532, Asn-603, Asn-626, Asn-653, Asn-733, Asn-756, Asn-785, Asn-793, Asn-819, and Asn-905.

This sequence belongs to the glycosyl hydrolase 2 family. Beta-mannosidase A subfamily. As to quaternary structure, homodimer.

The protein localises to the secreted. The catalysed reaction is Hydrolysis of terminal, non-reducing beta-D-mannose residues in beta-D-mannosides.. It functions in the pathway glycan metabolism; N-glycan degradation. Its function is as follows. Exoglycosidase that cleaves the single beta-linked mannose residue from the non-reducing end of beta-mannosidic oligosaccharides of various complexity and length. Involved in the degradation of polymeric mannan and galactomannan. This Aspergillus fumigatus (strain CBS 144.89 / FGSC A1163 / CEA10) (Neosartorya fumigata) protein is Beta-mannosidase A (mndA).